The sequence spans 704 residues: Polyribonucleotide nucleotidyltransferase 4 (704 aa).

The Mg(2+) site is built by Asp-483 and Asp-489. The KH domain occupies 550 to 609 (PRVLKMKIHPDKIRDVIGSGGKTINRIIDETGVKIDIDNDGTIFIAAESQEAVEKAIIII). Residues 619 to 687 (GQNYTGKVIK…QQGKINLSRK (69 aa)) form the S1 motif domain.

Belongs to the polyribonucleotide nucleotidyltransferase family. Requires Mg(2+) as cofactor.

It is found in the cytoplasm. The catalysed reaction is RNA(n+1) + phosphate = RNA(n) + a ribonucleoside 5'-diphosphate. Functionally, involved in mRNA degradation. Catalyzes the phosphorolysis of single-stranded polyribonucleotides processively in the 3'- to 5'-direction. The chain is Polyribonucleotide nucleotidyltransferase 4 from Alkaliphilus metalliredigens (strain QYMF).